Consider the following 176-residue polypeptide: NAD(P)H-quinone oxidoreductase subunit 6, chloroplastic (176 aa).

5 consecutive transmembrane segments (helical) span residues 10–30 (FLLVFLGSGLILGGLGVVLLP), 32–52 (PIYSAFSLGLVLVCTSLFYIL), 61–81 (AQLLIYVGAINVLIIFAVMFM), 92–112 (LWTVGDGITSMVCISLFISLI), and 152–172 (FFLPFELISIILLVALIGAIA).

The protein belongs to the complex I subunit 6 family. In terms of assembly, NDH is composed of at least 16 different subunits, 5 of which are encoded in the nucleus.

It is found in the plastid. It localises to the chloroplast thylakoid membrane. It catalyses the reaction a plastoquinone + NADH + (n+1) H(+)(in) = a plastoquinol + NAD(+) + n H(+)(out). It carries out the reaction a plastoquinone + NADPH + (n+1) H(+)(in) = a plastoquinol + NADP(+) + n H(+)(out). Its function is as follows. NDH shuttles electrons from NAD(P)H:plastoquinone, via FMN and iron-sulfur (Fe-S) centers, to quinones in the photosynthetic chain and possibly in a chloroplast respiratory chain. The immediate electron acceptor for the enzyme in this species is believed to be plastoquinone. Couples the redox reaction to proton translocation, and thus conserves the redox energy in a proton gradient. The protein is NAD(P)H-quinone oxidoreductase subunit 6, chloroplastic (ndhG) of Solanum lycopersicum (Tomato).